A 234-amino-acid polypeptide reads, in one-letter code: Peptidase E (234 aa).

Catalysis depends on charge relay system residues serine 123, aspartate 138, and histidine 160.

This sequence belongs to the peptidase S51 family.

The protein localises to the cytoplasm. The enzyme catalyses Dipeptidase E catalyzes the hydrolysis of dipeptides Asp-|-Xaa. It does not act on peptides with N-terminal Glu, Asn or Gln, nor does it cleave isoaspartyl peptides.. In terms of biological role, hydrolyzes dipeptides containing N-terminal aspartate residues. May play a role in allowing the cell to use peptide aspartate to spare carbon otherwise required for the synthesis of the aspartate family of amino acids. This Actinobacillus pleuropneumoniae serotype 5b (strain L20) protein is Peptidase E.